We begin with the raw amino-acid sequence, 407 residues long: Argininosuccinate synthase (407 aa).

Residues alanine 10–serine 18 and alanine 37 each bind ATP. The L-citrulline site is built by tyrosine 90 and serine 95. Glycine 120 serves as a coordination point for ATP. Residues threonine 122, asparagine 126, and aspartate 127 each coordinate L-aspartate. Residue asparagine 126 participates in L-citrulline binding. L-citrulline is bound by residues arginine 130, serine 181, serine 190, glutamate 266, and tyrosine 278.

It belongs to the argininosuccinate synthase family. Type 1 subfamily. As to quaternary structure, homotetramer.

Its subcellular location is the cytoplasm. It catalyses the reaction L-citrulline + L-aspartate + ATP = 2-(N(omega)-L-arginino)succinate + AMP + diphosphate + H(+). Its pathway is amino-acid biosynthesis; L-arginine biosynthesis; L-arginine from L-ornithine and carbamoyl phosphate: step 2/3. In Ruegeria sp. (strain TM1040) (Silicibacter sp.), this protein is Argininosuccinate synthase.